A 353-amino-acid polypeptide reads, in one-letter code: Inositol 3-kinase (353 aa).

Residues Ser197, 247–250 (GAGD), and Asn274 contribute to the ATP site. Catalysis depends on Asp250, which acts as the Proton acceptor.

It belongs to the carbohydrate kinase pfkB family.

The catalysed reaction is myo-inositol + ATP = 1D-myo-inositol 3-phosphate + ADP + H(+). Functionally, kinase that phosphorylates myo-inositol to produce multiple myo-inositol monophosphates. Participates in phytic acid biosynthesis in developing seeds. Phytic acid is the primary storage form of phosphorus in cereal grains and other plant seeds. The chain is Inositol 3-kinase from Arabidopsis thaliana (Mouse-ear cress).